Consider the following 305-residue polypeptide: MQQTNPAAVGDYLRKLQQEIVAAVEAADGGTCVRDAWQKEPGEALQGSGLTCILEGGALFERAGCGFSQVRGPRLPPSATQNRPELAGAPFEAMGVSLVFHPRNPYVPIVHMNVRMLAALPEGKDPVCWFGGGMDLTPCYGFEDDAVHFHTVCRDALAPFGDDKYPRFKTWCDEYFFLKHRNEQRGIGGIFFDDFAEGGFDNGFALLRSVGNAFLPAYLPIIERRRAMPWGERERAFQLYRRGRYVEFNLVWDRGTHFGLQSGGRTESILLSMPPLASWAYQQQPEPGSPEAALYSDFIVRRDWL.

S97 serves as a coordination point for substrate. A divalent metal cation-binding residues include H101 and H111. H111 (proton donor) is an active-site residue. 113 to 115 (NVR) is a substrate binding site. Residues H150 and H180 each contribute to the a divalent metal cation site. The interval 245 to 280 (YVEFNLVWDRGTHFGLQSGGRTESILLSMPPLASWA) is important for dimerization. Residue 263-265 (GGR) participates in substrate binding.

It belongs to the aerobic coproporphyrinogen-III oxidase family. As to quaternary structure, homodimer. A divalent metal cation is required as a cofactor.

It localises to the cytoplasm. It carries out the reaction coproporphyrinogen III + O2 + 2 H(+) = protoporphyrinogen IX + 2 CO2 + 2 H2O. The protein operates within porphyrin-containing compound metabolism; protoporphyrin-IX biosynthesis; protoporphyrinogen-IX from coproporphyrinogen-III (O2 route): step 1/1. Involved in the heme biosynthesis. Catalyzes the aerobic oxidative decarboxylation of propionate groups of rings A and B of coproporphyrinogen-III to yield the vinyl groups in protoporphyrinogen-IX. The polypeptide is Oxygen-dependent coproporphyrinogen-III oxidase (Variovorax paradoxus (strain S110)).